The primary structure comprises 1024 residues: MEKRNETGNNRLKRSNNRGKSKKDWKDASVETTPRETSVDEDNTSVFEDVEAQDSRQKRFSSTLEGNRFEELRSLREKEREVAIQNGLIDDPTKPRQLDEAVTFVGTCPDMCPEYEREQREYQNNLERWEINPETGRVDKNLAVKAFHRPAAGNEQALPSDVRPPPVLKKSLDYLVDKIVCGPDPLENTHFFVRDRTRSIRQDFTLQNCRDLDAVACHERIARYHILCIHQLCEKKQFSAQQEVEQLRKGILQSLCEFYDDLRKVKIRCPNEPEFRSYAIITHLRDPDVVRQSQILPIEIFDDQRVQLALRLSALAQKNNERVGHILPRNTEACPNLYTRFFKLVQSPAVTYLMACLLESHFMSIRKGALKAMRKAFMSAHANFPCGDLKRILHFDTVEQAASFSRYYGLEVSDDNGELSINLNKTAFFNDSKPDFRQLFSQTLVESKLQNRSFADIINGSRYNIDRVSPNTAFSTNIPLSLPFANKEPQPIAGFKKNTPETSVVSKNLSTFNGKFNVNAPVFTPRSFPTKPFSATDISSVQPTNLPNGSTNGTETFIPPVQNSITSNKEAVKPIKNKPKPISFESLSAVGNLIISDSLSRIVRQILQNLYTEWVHEKTNLVFATMFRTIFREVLLDGIASEVYLKSLKKHAISQISVRAHHSWVKKQEKMMLEMREKNRQEKYFSVLNSVVKAESSNITRLPIKRTFYGDTRNLDKASEKLRAEHDRTRRLWKPVLMDSLFSNLQKFPVYEDWHLLIFNASTSSMMKTWLCAKFSLKETNKTSFWHSSYNLFNRQYHVDMPDNVSDLPQTRLCYGACVYNVGLLDEEKRKDLANSDLNSSPKLIQGNDSRSAHESSANKLFSFVHDISRLTITKLPLLLIFWSDSNLDMQGITQKYRFLELITSTWSAISSIHVLTITNDRDMDLEHSLKVLLDNVTVEKSPFAQLEELEVVRKKREAEIEASSKTVKRLASNNKFLTDSNVEGLLEAPTSLENSLVEDDKWASLRQKIKAARDLLKKVETFY.

Residues 1–62 (MEKRNETGNN…QDSRQKRFSS (62 aa)) form a disordered region. A compositionally biased stretch (basic residues) spans 11–21 (RLKRSNNRGKS). Residues 22-38 (KKDWKDASVETTPRETS) show a composition bias toward basic and acidic residues. Over residues 39 to 52 (VDEDNTSVFEDVEA) the composition is skewed to acidic residues. One can recognise a PCI domain in the interval 243–433 (EVEQLRKGIL…NKTAFFNDSK (191 aa)). Ser-841 is modified (phosphoserine). Residues 945–1022 (AQLEELEVVR…ARDLLKKVET (78 aa)) are a coiled coil.

This sequence belongs to the SAC3 family.

The protein resides in the cytoplasm. It is found in the nucleus envelope. This chain is SAC3 family protein 1, found in Schizosaccharomyces pombe (strain 972 / ATCC 24843) (Fission yeast).